Reading from the N-terminus, the 274-residue chain is MAHYFVGDVQGCFAELKRLLAEVDFNPSRDELWAVGDLVARGPDSLATLRYFQSLGDAGKTVLGNHDLHLLALHGKLKRDKPSDNLAPLLNAPDIASLIYWLRQQPLMRELPEHKVIMTHAGVPPQWSLDVLRQESQLVSQALKQGDYLDALISQMYSDTAERWDPSAIGLNRLRFCINALTRMRYLYVDGHLDFDCKQPPEDCNNPQLRPWFEFTSALRQSHTLVFGHWAALMGKVNDPKLKALDTGCCWGEYLTLWHLEKDQKITQKKLKKG.

It belongs to the Ap4A hydrolase family.

The catalysed reaction is P(1),P(4)-bis(5'-adenosyl) tetraphosphate + H2O = 2 ADP + 2 H(+). Hydrolyzes diadenosine 5',5'''-P1,P4-tetraphosphate to yield ADP. This chain is Bis(5'-nucleosyl)-tetraphosphatase, symmetrical, found in Shewanella sp. (strain MR-4).